The chain runs to 281 residues: NAD-dependent protein deacetylase 1 (281 aa).

Positions 1-281 constitute a Deacetylase sirtuin-type domain; it reads MEEGAALEGV…FDQILDALDL (281 aa). NAD(+) contacts are provided by residues 24–44 and 102–105; these read GAGV…GSLN and QNVD. Histidine 120 functions as the Proton acceptor in the catalytic mechanism. 4 residues coordinate Zn(2+): cysteine 128, cysteine 131, cysteine 183, and cysteine 186. Residues 224 to 226, 250 to 252, and valine 268 each bind NAD(+); these read GSS and NGG.

The protein belongs to the sirtuin family. Class II subfamily. The cofactor is Zn(2+).

It localises to the cytoplasm. The enzyme catalyses N(6)-acetyl-L-lysyl-[protein] + NAD(+) + H2O = 2''-O-acetyl-ADP-D-ribose + nicotinamide + L-lysyl-[protein]. In terms of biological role, NAD-dependent protein deacetylase which modulates the activities of several enzymes which are inactive in their acetylated form. The protein is NAD-dependent protein deacetylase 1 of Corynebacterium efficiens (strain DSM 44549 / YS-314 / AJ 12310 / JCM 11189 / NBRC 100395).